Here is a 730-residue protein sequence, read N- to C-terminus: uncharacterized protein (730 aa).

Phosphoserine is present on residues S82 and S89. Disordered regions lie at residues 82-114 (SPVR…TGSY) and 447-468 (NTNH…SKNE). A compositionally biased stretch (polar residues) spans 89 to 98 (SIQPSNSGKN). Positions 449-460 (NHNFTTNNNNEN) are enriched in low complexity. 2 positions are modified to phosphoserine: S483 and S651.

This is an uncharacterized protein from Saccharomyces cerevisiae (strain ATCC 204508 / S288c) (Baker's yeast).